A 113-amino-acid polypeptide reads, in one-letter code: Major basic nuclear protein 1 (113 aa).

The disordered stretch occupies residues 1 to 20 (MAPKMKAAMKAMKAPAMKGK).

It is found in the nucleus. The protein is Major basic nuclear protein 1 (HCc1) of Crypthecodinium cohnii (Dinoflagellate).